We begin with the raw amino-acid sequence, 696 residues long: Mitosis initiation protein fs(1)Ya (696 aa).

Disordered regions lie at residues 245-285 (NAST…RAWK), 336-379 (EHSS…YSTS), and 457-492 (IKFETPPKSSQQMRSNGEGDETKDQFFTPEPGTPEI). Low complexity-rich tracts occupy residues 270–281 (QQQQQQQQPLQQ) and 361–379 (SESSASEVNSGSSSSYSTS). Positions 448 to 696 (TGAGINKKQI…REPIERMRRQ (249 aa)) are rich in charged AA. Residues Thr-478, Thr-484, and Thr-489 each carry the phosphothreonine modification. 2 short sequence motifs (nuclear localization signal) span residues 512-520 (PKKDKPKEK) and 534-538 (QPRVR). Disordered regions lie at residues 555 to 586 (DVGEPEVVDAEEEDEVFRPTNASTCNDKKLEA) and 603 to 696 (PASL…MRRQ). Residues 557 to 569 (GEPEVVDAEEEDE) show a composition bias toward acidic residues. Basic and acidic residues-rich tracts occupy residues 607–624 (RGEREKDRDRDRDSDKEN) and 685–696 (RPREPIERMRRQ).

It is found in the nucleus envelope. The protein resides in the nucleus. The protein localises to the nucleoplasm. Its subcellular location is the cytoplasm. Its function is as follows. Cell cycle-dependent nuclear envelope component required for embryonic mitosis. In Drosophila melanogaster (Fruit fly), this protein is Mitosis initiation protein fs(1)Ya (fs(1)Ya).